A 906-amino-acid polypeptide reads, in one-letter code: Ribonucleoside-diphosphate reductase large subunit-like protein (906 aa).

2 disordered regions span residues 1–70 (MNPA…AGNT) and 89–129 (VSWR…LSTF). Over residues 98–109 (PDGTPSVLSLTR) the composition is skewed to polar residues.

It belongs to the ribonucleoside diphosphate reductase large chain family.

It localises to the virion. Its subcellular location is the host cytoplasm. Does not possess a ribonucleotide reductase activity. Betaherpesviruses probably use another strategy to expand the dNTP pool in a quiescent host cell. This chain is Ribonucleoside-diphosphate reductase large subunit-like protein, found in Homo sapiens (Human).